Consider the following 98-residue polypeptide: Integration host factor subunit alpha (98 aa).

Positions 49 to 71 (FGNFDLRDKNQRPGRNPKTGEDI) are disordered.

Belongs to the bacterial histone-like protein family. As to quaternary structure, heterodimer of an alpha and a beta chain.

In terms of biological role, this protein is one of the two subunits of integration host factor, a specific DNA-binding protein that functions in genetic recombination as well as in transcriptional and translational control. This is Integration host factor subunit alpha from Shewanella sp. (strain ANA-3).